The following is a 234-amino-acid chain: ATP-dependent dethiobiotin synthetase BioD (234 aa).

12-17 (DVGKTF) contacts ATP. Residue threonine 16 participates in Mg(2+) binding. Lysine 37 is an active-site residue. Serine 41 serves as a coordination point for substrate. Residues aspartate 52, 118 to 121 (EGAG), and 178 to 179 (SQ) each bind ATP. 2 residues coordinate Mg(2+): aspartate 52 and glutamate 118.

Belongs to the dethiobiotin synthetase family. In terms of assembly, homodimer. Requires Mg(2+) as cofactor.

It is found in the cytoplasm. It catalyses the reaction (7R,8S)-7,8-diammoniononanoate + CO2 + ATP = (4R,5S)-dethiobiotin + ADP + phosphate + 3 H(+). It participates in cofactor biosynthesis; biotin biosynthesis; biotin from 7,8-diaminononanoate: step 1/2. Functionally, catalyzes a mechanistically unusual reaction, the ATP-dependent insertion of CO2 between the N7 and N8 nitrogen atoms of 7,8-diaminopelargonic acid (DAPA, also called 7,8-diammoniononanoate) to form a ureido ring. This is ATP-dependent dethiobiotin synthetase BioD from Phenylobacterium zucineum (strain HLK1).